We begin with the raw amino-acid sequence, 402 residues long: MKRTFILMMDSFGIGAAADADKFGDVGANTLGHIAKACAAGEIEGRGALNLPNLSKLGLGHAGELASGTFPAGLNKDIDVVGAYGFAQELSSGKDTPSGHWEIAGVPVLFEWGYFHDHHNSFPQELLDAIVEKAGLPGYLGNCHASGTQVLDDLGEEHMRTGKPILYTSADSVFQIACHEETYGLEKLYELCHIVRELLEPYNIGRVIARPFVGSGKGNFKRTGNRHDYSVLPPAPTVLDYMKEAGGQVVSIGKIADIYAQQGITKQVKGTGLTELWDRTLEEVKAAGDQTIVFTNFVDFDSSYGHRRDVKGYADALEYFDSRLPELFELLEDGDVVVLTADHGCDPTWGGTDHTREYIPVLFYGKPVKAGSVGRRETFADIGQSIAAYHGLPKLAYGTSFL.

Mn(2+) is bound by residues aspartate 10, aspartate 301, histidine 306, aspartate 342, histidine 343, and histidine 354.

This sequence belongs to the phosphopentomutase family. The cofactor is Mn(2+).

Its subcellular location is the cytoplasm. The enzyme catalyses 2-deoxy-alpha-D-ribose 1-phosphate = 2-deoxy-D-ribose 5-phosphate. It carries out the reaction alpha-D-ribose 1-phosphate = D-ribose 5-phosphate. It participates in carbohydrate degradation; 2-deoxy-D-ribose 1-phosphate degradation; D-glyceraldehyde 3-phosphate and acetaldehyde from 2-deoxy-alpha-D-ribose 1-phosphate: step 1/2. In terms of biological role, isomerase that catalyzes the conversion of deoxy-ribose 1-phosphate (dRib-1-P) and ribose 1-phosphate (Rib-1-P) to deoxy-ribose 5-phosphate (dRib-5-P) and ribose 5-phosphate (Rib-5-P), respectively. The protein is Phosphopentomutase of Aeromonas hydrophila subsp. hydrophila (strain ATCC 7966 / DSM 30187 / BCRC 13018 / CCUG 14551 / JCM 1027 / KCTC 2358 / NCIMB 9240 / NCTC 8049).